Here is a 220-residue protein sequence, read N- to C-terminus: Deoxyribose-phosphate aldolase 2 (220 aa).

D89 functions as the Proton donor/acceptor in the catalytic mechanism. The active-site Schiff-base intermediate with acetaldehyde is K151. Catalysis depends on K180, which acts as the Proton donor/acceptor.

This sequence belongs to the DeoC/FbaB aldolase family. DeoC type 1 subfamily.

It localises to the cytoplasm. The enzyme catalyses 2-deoxy-D-ribose 5-phosphate = D-glyceraldehyde 3-phosphate + acetaldehyde. The protein operates within carbohydrate degradation; 2-deoxy-D-ribose 1-phosphate degradation; D-glyceraldehyde 3-phosphate and acetaldehyde from 2-deoxy-alpha-D-ribose 1-phosphate: step 2/2. Functionally, catalyzes a reversible aldol reaction between acetaldehyde and D-glyceraldehyde 3-phosphate to generate 2-deoxy-D-ribose 5-phosphate. The protein is Deoxyribose-phosphate aldolase 2 of Staphylococcus aureus (strain MRSA252).